The chain runs to 228 residues: Auxin-responsive protein IAA16 (228 aa).

The EAR-like (transcriptional repression) signature appears at 19-23 (LSLAL). Residues 28–39 (SSSGLQGNTSTA) are compositionally biased toward polar residues. 2 disordered regions span residues 28-57 (SSSGLQGNTSTAADGAKGNDGFKASRPAAP) and 70-90 (NLASSSSSSKPPRGGRDAAAA). A PB1 domain is found at 97 to 214 (ARFVKVNMDG…RVLRSSDLNA (118 aa)).

Belongs to the Aux/IAA family. In terms of assembly, homodimers and heterodimers. Expressed in roots, flowers and seedlings.

The protein resides in the nucleus. Its function is as follows. Aux/IAA proteins are short-lived transcriptional factors that function as repressors of early auxin response genes at low auxin concentrations. This Oryza sativa subsp. japonica (Rice) protein is Auxin-responsive protein IAA16 (IAA16).